A 578-amino-acid polypeptide reads, in one-letter code: Longifolene synthase (578 aa).

Asp-331, Asp-335, and Asp-475 together coordinate Mg(2+). Positions 331–335 (DDLYD) match the DDXXD motif motif.

It belongs to the terpene synthase family. Tpsd subfamily. Mg(2+) serves as cofactor. Requires Mn(2+) as cofactor.

The enzyme catalyses (2E,6E)-farnesyl diphosphate = longifolene + diphosphate. The protein operates within sesquiterpene biosynthesis. It functions in the pathway terpene metabolism; oleoresin biosynthesis. In terms of biological role, terpene synthase (TPS) involved in the biosynthesis of sesquiterpene natural products included in conifer oleoresin secretions and volatile emissions; these compounds contribute to biotic and abiotic stress defense against herbivores and pathogens. Catalyzes the conversion of (2E,6E)-farnesyl diphosphate (FPP) to longifolene. The protein is Longifolene synthase of Picea engelmannii x Picea glauca (Hybrid white spruce).